Reading from the N-terminus, the 539-residue chain is Phosphoenolpyruvate carboxykinase (ATP) (539 aa).

Positions 64, 206, and 212 each coordinate substrate. Residues Lys212, His231, and 247–255 (GLSGTGKTT) each bind ATP. Mn(2+) is bound by residues Lys212 and His231. Asp268 is a Mn(2+) binding site. ATP contacts are provided by residues Glu296, Arg332, 448-449 (RI), and Thr454. Arg332 is a substrate binding site.

This sequence belongs to the phosphoenolpyruvate carboxykinase (ATP) family. Monomer. It depends on Mn(2+) as a cofactor.

It localises to the cytoplasm. It carries out the reaction oxaloacetate + ATP = phosphoenolpyruvate + ADP + CO2. It participates in carbohydrate biosynthesis; gluconeogenesis. Involved in the gluconeogenesis. Catalyzes the conversion of oxaloacetate (OAA) to phosphoenolpyruvate (PEP) through direct phosphoryl transfer between the nucleoside triphosphate and OAA. The chain is Phosphoenolpyruvate carboxykinase (ATP) from Yersinia pseudotuberculosis serotype IB (strain PB1/+).